A 248-amino-acid polypeptide reads, in one-letter code: 2,3-bisphosphoglycerate-dependent phosphoglycerate mutase (248 aa).

Residues 8 to 15, 21 to 22, Arg-60, 87 to 90, Lys-98, and 114 to 115 each bind substrate; these read RHGESTWN, TG, ERHY, and RR. His-9 serves as the catalytic Tele-phosphohistidine intermediate. Glu-87 functions as the Proton donor/acceptor in the catalytic mechanism. A disordered region spans residues 117–137; sequence YDTPPPALEPTDPRASYDDPR. The segment covering 127-137 has biased composition (basic and acidic residues); the sequence is TDPRASYDDPR. 183-184 contacts substrate; it reads GN.

Belongs to the phosphoglycerate mutase family. BPG-dependent PGAM subfamily. Homodimer.

The enzyme catalyses (2R)-2-phosphoglycerate = (2R)-3-phosphoglycerate. It functions in the pathway carbohydrate degradation; glycolysis; pyruvate from D-glyceraldehyde 3-phosphate: step 3/5. Catalyzes the interconversion of 2-phosphoglycerate and 3-phosphoglycerate. The chain is 2,3-bisphosphoglycerate-dependent phosphoglycerate mutase from Cupriavidus taiwanensis (strain DSM 17343 / BCRC 17206 / CCUG 44338 / CIP 107171 / LMG 19424 / R1) (Ralstonia taiwanensis (strain LMG 19424)).